The following is an 83-amino-acid chain: Toxin AahP985 (83 aa).

Positions 1–18 (MNYLVMISLALLIAGVDS) are cleaved as a signal peptide. The LCN-type CS-alpha/beta domain maps to 20–82 (RDAYIAKNDN…VPIKLSGECH (63 aa)). Intrachain disulfides connect Cys30/Cys81, Cys34/Cys54, Cys40/Cys64, and Cys44/Cys66.

It belongs to the long (4 C-C) scorpion toxin superfamily. Sodium channel inhibitor family. Alpha subfamily. In terms of tissue distribution, expressed by the venom gland.

It localises to the secreted. Binds voltage-independently at site-3 of sodium channels (Nav) and inhibits the inactivation of the activated channels, thereby blocking neuronal transmission. This chain is Toxin AahP985, found in Androctonus australis (Sahara scorpion).